A 208-amino-acid polypeptide reads, in one-letter code: Uracil phosphoribosyltransferase (208 aa).

5-phospho-alpha-D-ribose 1-diphosphate is bound by residues arginine 78, arginine 103, and 130–138 (DPMLATGGS). Uracil contacts are provided by residues isoleucine 193 and 198–200 (GDA). Aspartate 199 serves as a coordination point for 5-phospho-alpha-D-ribose 1-diphosphate.

Belongs to the UPRTase family. Mg(2+) serves as cofactor.

It catalyses the reaction UMP + diphosphate = 5-phospho-alpha-D-ribose 1-diphosphate + uracil. Its pathway is pyrimidine metabolism; UMP biosynthesis via salvage pathway; UMP from uracil: step 1/1. Its activity is regulated as follows. Allosterically activated by GTP. Functionally, catalyzes the conversion of uracil and 5-phospho-alpha-D-ribose 1-diphosphate (PRPP) to UMP and diphosphate. The sequence is that of Uracil phosphoribosyltransferase from Pelobacter propionicus (strain DSM 2379 / NBRC 103807 / OttBd1).